The following is a 283-amino-acid chain: Pantothenate synthetase (283 aa).

30-37 (MGALHEGH) lines the ATP pocket. His37 acts as the Proton donor in catalysis. Gln61 is a (R)-pantoate binding site. Gln61 provides a ligand contact to beta-alanine. Position 147 to 150 (147 to 150 (GMKD)) interacts with ATP. Position 153 (Gln153) interacts with (R)-pantoate. ATP contacts are provided by residues Val176 and 184–187 (LSSR).

This sequence belongs to the pantothenate synthetase family. In terms of assembly, homodimer.

Its subcellular location is the cytoplasm. The enzyme catalyses (R)-pantoate + beta-alanine + ATP = (R)-pantothenate + AMP + diphosphate + H(+). The protein operates within cofactor biosynthesis; (R)-pantothenate biosynthesis; (R)-pantothenate from (R)-pantoate and beta-alanine: step 1/1. Catalyzes the condensation of pantoate with beta-alanine in an ATP-dependent reaction via a pantoyl-adenylate intermediate. The sequence is that of Pantothenate synthetase from Endomicrobium trichonymphae.